The following is a 663-amino-acid chain: MAATEISVLSEQFTKIKELELMPEKGLKEEEKDGVCREKDHRSPSELEAERTSGAFQDSVLEEEVELVLAPSEESEKYILTLQTVHFTSEAVELQDMSLLSIQQQEGVQVVVQQPGPGLLWLEEGPRQSLQQCVAISIQQELYSPQEMEVLQFHALEENVMVASEDSKLAVSLAETTGLIKLEEEQEKNQLLAERTKEQLFFVETMSGDERSDEIVLTVSNSNVEEQEDQPTAGQADAEKAKSTKNQRKTKGAKGTFHCDVCMFTSSRMSSFNRHMKTHTSEKPHLCHLCLKTFRTVTLLRNHVNTHTGTRPYKCNDCNMAFVTSGELVRHRRYKHTHEKPFKCSMCKYASVEASKLKRHVRSHTGERPFQCCQCSYASRDTYKLKRHMRTHSGEKPYECHICHTRFTQSGTMKIHILQKHGENVPKYQCPHCATIIARKSDLRVHMRNLHAYSAAELKCRYCSAVFHERYALIQHQKTHKNEKRFKCKHCSYACKQERHMTAHIRTHTGEKPFTCLSCNKCFRQKQLLNAHFRKYHDANFIPTVYKCSKCGKGFSRWINLHRHSEKCGSGEAKSAASGKGRRTRKRKQTILKEATKGQKEAAKGWKEAANGDEAAAEEASTTKGEQFPGEMFPVACRETTARVKEEVDEGVTCEMLLNTMDK.

Residues 24-51 (EKGLKEEEKDGVCREKDHRSPSELEAER) are compositionally biased toward basic and acidic residues. Disordered stretches follow at residues 24-55 (EKGL…TSGA) and 221-250 (NSNV…QRKT). 10 consecutive C2H2-type zinc fingers follow at residues 257–279 (FHCD…MKTH), 285–307 (HLCH…VNTH), 313–336 (YKCN…RYKH), 342–364 (FKCS…VRSH), 370–392 (FQCC…MRTH), 398–421 (YECH…LQKH), 428–451 (YQCP…RNLH), 458–480 (LKCR…QKTH), 486–508 (FKCK…IRTH), and 514–537 (FTCL…RKYH). A C2H2-type 11; atypical zinc finger spans residues 546–568 (YKCSKCGKGFSRWINLHRHSEKC). Positions 569–630 (GSGEAKSAAS…STTKGEQFPG (62 aa)) are disordered. The segment covering 580 to 590 (KGRRTRKRKQT) has biased composition (basic residues). Positions 594-607 (EATKGQKEAAKGWK) are enriched in basic and acidic residues. Positions 608-620 (EAANGDEAAAEEA) are enriched in low complexity.

The protein belongs to the CTCF zinc-finger protein family. Interacts with histones, PRMT7 and SETD1A. Interacts (via N-terminus) with BAG6/BAT3. Testis specific. Specifically expressed in primary spermatocytes.

It is found in the cytoplasm. It localises to the nucleus. Testis-specific DNA binding protein responsible for insulator function, nuclear architecture and transcriptional control, which probably acts by recruiting epigenetic chromatin modifiers. Plays a key role in gene imprinting in male germline, by participating in the establishment of differential methylation at the IGF2/H19 imprinted control region (ICR). Directly binds the unmethylated H19 ICR and recruits the PRMT7 methyltransferase, leading to methylate histone H4 'Arg-3' to form H4R3sme2. This probably leads to recruit de novo DNA methyltransferases at these sites. Seems to act as tumor suppressor. In association with DNMT1 and DNMT3B, involved in activation of BAG1 gene expression by binding to its promoter. Required for dimethylation of H3 lysine 4 (H3K4me2) of MYC and BRCA1 promoters. This is Transcriptional repressor CTCFL (CTCFL) from Homo sapiens (Human).